Here is a 648-residue protein sequence, read N- to C-terminus: DNA helicase/primase complex-associated protein (648 aa).

A disordered region spans residues 43–63 (LWPSDQNNTASPAGAKTDQPT).

This sequence belongs to the herpesviridae HEPA family. Associates with the primase and the helicase to form the helicase-primase complex. Interacts with the origin-binding protein. Interacts with the polymerase catalytic subunit.

It is found in the host nucleus. Its function is as follows. Component of the helicase/primase complex. Unwinds the DNA at the replication forks and generates single-stranded DNA for both leading and lagging strand synthesis. The primase synthesizes short RNA primers on the lagging strand that the polymerase presumably elongates using dNTPs. The primase-associated factor has no known catalytic activity in the complex and may serve to facilitate the formation of the replisome by directly interacting with the origin-binding protein and the polymerase. The protein is DNA helicase/primase complex-associated protein (UL8) of Amazona oratrix (yellow-headed parrot).